Here is a 446-residue protein sequence, read N- to C-terminus: N-succinylarginine dihydrolase (446 aa).

Residues 19 to 28, Asn-110, and 137 to 138 contribute to the substrate site; these read AGLSFGNVAS and HR. Glu-174 is a catalytic residue. Residue Arg-213 coordinates substrate. His-249 is a catalytic residue. Substrate-binding residues include Asp-251 and Asn-364. The active-site Nucleophile is Cys-370.

This sequence belongs to the succinylarginine dihydrolase family. In terms of assembly, homodimer.

The enzyme catalyses N(2)-succinyl-L-arginine + 2 H2O + 2 H(+) = N(2)-succinyl-L-ornithine + 2 NH4(+) + CO2. Its pathway is amino-acid degradation; L-arginine degradation via AST pathway; L-glutamate and succinate from L-arginine: step 2/5. Functionally, catalyzes the hydrolysis of N(2)-succinylarginine into N(2)-succinylornithine, ammonia and CO(2). The chain is N-succinylarginine dihydrolase from Burkholderia ambifaria (strain ATCC BAA-244 / DSM 16087 / CCUG 44356 / LMG 19182 / AMMD) (Burkholderia cepacia (strain AMMD)).